The chain runs to 577 residues: Type I restriction enzyme MjaVII methylase subunit (577 aa).

S-adenosyl-L-methionine is bound by residues 251-256, 281-283, Glu306, and 335-336; these read EVYTPV, SGT, and DS.

Belongs to the N4/N6-methyltransferase family. As to quaternary structure, the type I restriction/modification system is composed of three polypeptides R, M and S.

It catalyses the reaction a 2'-deoxyadenosine in DNA + S-adenosyl-L-methionine = an N(6)-methyl-2'-deoxyadenosine in DNA + S-adenosyl-L-homocysteine + H(+). In terms of biological role, the subtype gamma methyltransferase (M) subunit of a type I restriction enzyme. The M and S subunits together form a methyltransferase (MTase) that methylates A-3 on the top and bottom strands of the sequence 5'-CAAN(7)TGG-3'. In the presence of the R subunit the complex can also act as an endonuclease, binding to the same target sequence but cutting the DNA some distance from this site. Whether the DNA is cut or modified depends on the methylation state of the target sequence. When the target site is unmodified, the DNA is cut. When the target site is hemimethylated, the complex acts as a maintenance MTase modifying the DNA so that both strands become methylated. After locating a non-methylated recognition site, the enzyme complex serves as a molecular motor that translocates DNA in an ATP-dependent manner until a collision occurs that triggers cleavage. The protein is Type I restriction enzyme MjaVII methylase subunit of Methanocaldococcus jannaschii (strain ATCC 43067 / DSM 2661 / JAL-1 / JCM 10045 / NBRC 100440) (Methanococcus jannaschii).